Reading from the N-terminus, the 486-residue chain is Matrilin-3 (486 aa).

The first 28 residues, 1 to 28 (MPRPAPARRLPGLLLLLWPLLLLPSAAP), serve as a signal peptide directing secretion. The disordered stretch occupies residues 32–75 (ARPGFRRLETRGPGGSPGRRPSPAAPDGAPASGTSEPGRARGAG). Residues 49–64 (GRRPSPAAPDGAPASG) are compositionally biased toward low complexity. Positions 83–258 (DLVFIIDSSR…GVIEKLSSRF (176 aa)) constitute a VWFA domain. Arg-198 carries the omega-N-methylarginine modification. EGF-like domains follow at residues 264-305 (ALDP…KTCS), 306-347 (ALDR…KTCS), 348-389 (AQDK…KTCS), and 390-431 (VRDK…KTCS). 12 cysteine pairs are disulfide-bonded: Cys-268–Cys-279, Cys-275–Cys-289, Cys-291–Cys-304, Cys-310–Cys-321, Cys-317–Cys-331, Cys-333–Cys-346, Cys-352–Cys-363, Cys-359–Cys-373, Cys-375–Cys-388, Cys-394–Cys-405, Cys-401–Cys-415, and Cys-417–Cys-430. The residue at position 441 (Ser-441) is a Phosphoserine; by FAM20C. Thr-442 is subject to Phosphothreonine; by FAM20C. Residues 456-480 (DKVSSYLQRLNTKLDDILEKLKINE) adopt a coiled-coil conformation.

As to quaternary structure, can form homooligomers (monomers, dimers, trimers and tetramers) and heterooligomers with matrilin-1. Interacts with COMP. Component of a complex containing at least CRELD2, MANF, MATN3 and PDIA4. In terms of tissue distribution, expressed only in cartilaginous tissues, such as vertebrae, ribs and shoulders.

It localises to the secreted. Major component of the extracellular matrix of cartilage and may play a role in the formation of extracellular filamentous networks. The chain is Matrilin-3 (MATN3) from Homo sapiens (Human).